The chain runs to 224 residues: MILKALPNESMPREKLLQRGPQALTDAELLAIFLRTGTQGMNVIELADFLIQDFGSLRQLFSASEQEFCQHKGLGQAKYVQLQAVLEMTQRYLAETLKRGDALTSPEQTKLYLSSILRDRQREAFYILFLDNQHRVIKDEILFEGTLDAASVYPREVVKRALHHNAAALILAHNHPSGVAEPSQADRRITRRLIDALALVDIRILDHFVIGDGESVSFAERGWI.

One can recognise an MPN domain in the interval 102–224 (ALTSPEQTKL…SVSFAERGWI (123 aa)). Zn(2+) contacts are provided by His173, His175, and Asp186. A JAMM motif motif is present at residues 173–186 (HNHPSGVAEPSQAD).

The protein belongs to the UPF0758 family.

This Vibrio parahaemolyticus serotype O3:K6 (strain RIMD 2210633) protein is UPF0758 protein VP0184.